Consider the following 155-residue polypeptide: Phosphopantetheine adenylyltransferase (155 aa).

It belongs to the eukaryotic CoaD family.

Its subcellular location is the cytoplasm. It catalyses the reaction (R)-4'-phosphopantetheine + ATP + H(+) = 3'-dephospho-CoA + diphosphate. Its pathway is cofactor biosynthesis; coenzyme A biosynthesis. Reversibly transfers an adenylyl group from ATP to 4'-phosphopantetheine, yielding dephospho-CoA (dPCoA) and pyrophosphate. In Pyrobaculum aerophilum (strain ATCC 51768 / DSM 7523 / JCM 9630 / CIP 104966 / NBRC 100827 / IM2), this protein is Phosphopantetheine adenylyltransferase.